The following is a 273-amino-acid chain: Acetyl-coenzyme A carboxylase carboxyl transferase subunit alpha (273 aa).

Residues 1–244 enclose the CoA carboxyltransferase C-terminal domain; that stretch reads MKKATQSKAW…KVVLKQALDE (244 aa).

This sequence belongs to the AccA family. Acetyl-CoA carboxylase is a heterohexamer composed of biotin carboxyl carrier protein (AccB), biotin carboxylase (AccC) and two subunits each of ACCase subunit alpha (AccA) and ACCase subunit beta (AccD).

The protein localises to the cytoplasm. The catalysed reaction is N(6)-carboxybiotinyl-L-lysyl-[protein] + acetyl-CoA = N(6)-biotinyl-L-lysyl-[protein] + malonyl-CoA. It participates in lipid metabolism; malonyl-CoA biosynthesis; malonyl-CoA from acetyl-CoA: step 1/1. In terms of biological role, component of the acetyl coenzyme A carboxylase (ACC) complex. First, biotin carboxylase catalyzes the carboxylation of biotin on its carrier protein (BCCP) and then the CO(2) group is transferred by the carboxyltransferase to acetyl-CoA to form malonyl-CoA. The sequence is that of Acetyl-coenzyme A carboxylase carboxyl transferase subunit alpha from Acinetobacter baumannii (strain AB0057).